The following is a 184-amino-acid chain: Ethylene-responsive transcription factor ERF024 (184 aa).

A disordered region spans residues M1–R21. A DNA-binding region (AP2/ERF) is located at residues L14–P72.

This sequence belongs to the AP2/ERF transcription factor family. ERF subfamily.

Its subcellular location is the nucleus. Its function is as follows. Probably acts as a transcriptional activator. Binds to the GCC-box pathogenesis-related promoter element. May be involved in the regulation of gene expression by stress factors and by components of stress signal transduction pathways. The polypeptide is Ethylene-responsive transcription factor ERF024 (ERF024) (Arabidopsis thaliana (Mouse-ear cress)).